Reading from the N-terminus, the 445-residue chain is Tubby-like F-box protein 8 (445 aa).

The F-box domain maps to 56-102 (ESRWASLPPELLRDVIRRLEASESTWPSRKDVVSCAAVCKAWREMCK).

This sequence belongs to the TUB family. Ubiquitous.

The sequence is that of Tubby-like F-box protein 8 (TULP8) from Oryza sativa subsp. japonica (Rice).